We begin with the raw amino-acid sequence, 221 residues long: Very-long-chain (3R)-3-hydroxyacyl-CoA dehydratase PASTICCINO 2 (221 aa).

At 1 to 11 the chain is on the cytoplasmic side; sequence MAGFLSVVRRV. A helical membrane pass occupies residues 12-32; sequence YLTLYNWIVFAGWAQVLYLAI. Topologically, residues 33 to 51 are lumenal; that stretch reads TTLKETGYENVYDAIEKPL. The helical transmembrane segment at 52 to 70 threads the bilayer; that stretch reads QLAQTAAVLEILHGLVGLV. At 71–76 the chain is on the cytoplasmic side; the sequence is RSPVSA. A helical membrane pass occupies residues 77 to 95; sequence TLPQIGSRLFLTWGILYSF. Over 96-100 the chain is Lumenal; it reads PEVRS. The chain crosses the membrane as a helical span at residues 101 to 122; it reads HFLVTSLVISWSITEIIRYSFF. Residues 123-142 lie on the Cytoplasmic side of the membrane; the sequence is GFKEALGFAPSWHLWLRYSS. The chain crosses the membrane as a helical span at residues 143–165; it reads FLLLYPTGITSEVGLIYLALPHI. Catalysis depends on residues Tyr147 and Glu154. At 166 to 184 the chain is on the lumenal side; sequence KTSEMYSVRMPNILNFSFD. A helical transmembrane segment spans residues 185 to 204; sequence FFYATILVLAIYVPGSPHMY. The Cytoplasmic portion of the chain corresponds to 205 to 221; the sequence is RYMLGQRKRALSKSKRE.

It belongs to the very long-chain fatty acids dehydratase HACD family. In terms of assembly, interacts with CDKA-1; but only with the 'Tyr-15' phosphorylated protein. Interacts with PAS1. Part of the fatty acid elongase complex which contains a beta-ketoacyl-CoA synthase (KCS), a beta-ketoacyl-CoA reductase (KCR), a beta-hydroxyacyl-CoA dehydratase (HCD) and an enoyl-CoA reductase (ECR). As to expression, high expression in young seedlings, roots, root tips, flowers and young siliques. Lower levels in leaves and stems.

The protein resides in the endoplasmic reticulum membrane. It is found in the cytoplasm. It localises to the nucleus. The enzyme catalyses a very-long-chain (3R)-3-hydroxyacyl-CoA = a very-long-chain (2E)-enoyl-CoA + H2O. The protein operates within lipid metabolism; fatty acid biosynthesis. Catalyzes the third of the four reactions of the long-chain fatty acids elongation cycle. This endoplasmic reticulum-bound enzymatic process, allows the addition of two carbons to the chain of long- and very long-chain fatty acids/VLCFAs per cycle. This enzyme catalyzes the dehydration of the 3-hydroxyacyl-CoA intermediate into trans-2,3-enoyl-CoA, within each cycle of fatty acid elongation. Thereby, it participates in the production of VLCFAs of different chain lengths that are involved in multiple biological processes as precursors of membrane lipids and lipid mediators. May be an anti-phosphatase that prevents CDKA-1 dephosphorylation and activation. Involved in the hormonal control of cell division and differentiation. Required for proliferation control of meristematic and non-meristematic cells. Negative regulator of the cell cycle. This chain is Very-long-chain (3R)-3-hydroxyacyl-CoA dehydratase PASTICCINO 2 (PAS2), found in Arabidopsis thaliana (Mouse-ear cress).